The following is a 92-amino-acid chain: Small ribosomal subunit protein bS20 (92 aa).

The protein belongs to the bacterial ribosomal protein bS20 family.

Functionally, binds directly to 16S ribosomal RNA. The protein is Small ribosomal subunit protein bS20 of Magnetococcus marinus (strain ATCC BAA-1437 / JCM 17883 / MC-1).